An 854-amino-acid polypeptide reads, in one-letter code: MAEGFAANRQWIGPEEAEELLDFDKATQMNEEGPLNPGVNPFRVPAVTEADKQEYCKILQPRLQEIRNEIQEVKLEEGNAGKFRRARFLRYSDESILSLIHLFIGYCTYLVNRRRLGSLRHDINIEAPQEEQYSSREQGTTENIKYGRRCLIGTASLYLLLFIGVAIYLGTTNAQIVWRLPPLVVPVEESEIIFWDCWAPEEPACQDFLGAMIHLKASTNISIQEGPTLGNWAREIWGTLFKKATRHCRRNKIWKRWNETITGPVGCANNTCYNISVIIPDYQCYLDRVDTWLQGKVNISLCLTGGKMLYNRDTKQLSYCTDPLQIPLINYTFGPNQTCMWNTSQIQDPEIPKCGWWNQIAYYNSCRWESTNVKFYCQRTQSQPGTWIRTISSWRQKNRWEWRPDFESEKVKISLQCNSTHNLTFAMRSSGDYGEVMGAWIEFGCHRNKSRFHTEARFRIRCRWNVGDNTSLIDTCGKNLNVSGANPVDCTMYANKMYNCSLQNGFTMKVDDLIMHFNMTKAVEMYNIAGNWSCKSDLPQNWGYMNCNCTNGTSNDNKMACPEDKGILRNWYNPVAGLRQALEKYQVVKQPEYIVVPTEVMTYKYKQKRAAIHIMLALATVLSIAGAGTGATAIGMVTQYQQVLATHQEALDKITEALKINNLRLVTLEHQMLVIGLKVEAIEKFLYTAFAMQELGCNQNQFFCEIPKELWLRYNMTLNQTIWNHGNITLGEWYNQTKYLQQKFYEIIMDIEQNNVQGKQGLQKLQNWQDWMGWIGKIPQYLKGLLGGILGIGLGILLLILCLPTLVDCIRNCISKVLGYTVIAMPEIDDEEETVQMELRKNGRQCGMSEKEEE.

The Extracellular portion of the chain corresponds to 1-783; sequence MAEGFAANRQ…WIGKIPQYLK (783 aa). Residues asparagine 220, asparagine 258, asparagine 269, asparagine 274, asparagine 298, asparagine 330, asparagine 336, asparagine 342, asparagine 418, asparagine 422, asparagine 448, asparagine 469, asparagine 481, asparagine 499, asparagine 518, asparagine 531, asparagine 548, and asparagine 551 are each glycosylated (N-linked (GlcNAc...) asparagine; by host). The interval 614–634 is fusion peptide; sequence IMLALATVLSIAGAGTGATAI. The stretch at 641-691 forms a coiled coil; sequence QQVLATHQEALDKITEALKINNLRLVTLEHQMLVIGLKVEAIEKFLYTAFA. The tract at residues 660 to 678 is immunosuppression; sequence INNLRLVTLEHQMLVIGLK. N-linked (GlcNAc...) asparagine; by host glycosylation is found at asparagine 715, asparagine 719, asparagine 727, and asparagine 735. Positions 734-770 form a coiled coil; it reads YNQTKYLQQKFYEIIMDIEQNNVQGKQGLQKLQNWQD. A helical transmembrane segment spans residues 784 to 804; it reads GLLGGILGIGLGILLLILCLP. Topologically, residues 805-854 are cytoplasmic; that stretch reads TLVDCIRNCISKVLGYTVIAMPEIDDEEETVQMELRKNGRQCGMSEKEEE.

In terms of assembly, the mature envelope protein (Env) consists of a trimer of SU-TM heterodimers attached by non-covalent interactions or by a labile interchain disulfide bond. Specific enzymatic cleavages in vivo yield mature proteins. Envelope glycoproteins are synthesized as an inactive precursor that is N-glycosylated and processed likely by host cell furin or by a furin-like protease in the Golgi to yield the mature SU and TM proteins. The cleavage site between SU and TM requires the minimal sequence [KR]-X-[KR]-R.

It localises to the virion membrane. The protein localises to the host cell membrane. Its function is as follows. The surface protein (SU) attaches the virus to the host cell by binding to its receptor. This interaction triggers the refolding of the transmembrane protein (TM) and is thought to activate its fusogenic potential by unmasking its fusion peptide. Fusion occurs at the host cell plasma membrane. The transmembrane protein (TM) acts as a class I viral fusion protein. Under the current model, the protein has at least 3 conformational states: pre-fusion native state, pre-hairpin intermediate state, and post-fusion hairpin state. During viral and target cell membrane fusion, the coiled coil regions (heptad repeats) assume a trimer-of-hairpins structure, positioning the fusion peptide in close proximity to the C-terminal region of the ectodomain. The formation of this structure appears to drive apposition and subsequent fusion of viral and target cell membranes. Membranes fusion leads to delivery of the nucleocapsid into the cytoplasm. This Feline immunodeficiency virus (strain San Diego) (FIV) protein is Envelope glycoprotein gp150 (env).